Here is a 1013-residue protein sequence, read N- to C-terminus: MDIS1-interacting receptor like kinase 1 (1013 aa).

Positions 1-23 are cleaved as a signal peptide; sequence MKMKIIVLFLYYCYIGSTSSVLA. Topologically, residues 24-633 are extracellular; that stretch reads SIDNVNELSV…SSHSSLHGKR (610 aa). 7 N-linked (GlcNAc...) asparagine glycosylation sites follow: N61, N82, N101, N137, N146, N151, and N155. LRR repeat units follow at residues 70 to 94, 95 to 117, 119 to 137, 139 to 163, 164 to 186, 187 to 213, 215 to 234, 235 to 259, 260 to 283, 284 to 307, 308 to 331, 333 to 355, 357 to 379, 381 to 403, 405 to 426, 427 to 451, 453 to 475, 477 to 498, 499 to 523, 525 to 547, 548 to 571, and 573 to 595; these read NGNVEKLDLAGMNLTGKISDSISQL, SSLVSFNISCNGFESLLPKSIPP, KSIDISQNSFSGSLFLFSN, SLGLVHLNASGNNLSGNLTEDLGNL, VSLEVLDLRGNFFQGSLPSSFKN, LQKLRFLGLSGNNLTGELPSVLGQLPS, ETAILGYNEFKGPIPPEFGN, INSLKYLDLAIGKLSGEIPSELGKL, KSLETLLLYENNFTGTIPREIGSI, TTLKVLDFSDNALTGEIPMEITKL, KNLQLLNLMRNKLSGSIPPAISSL, QLQVLELWNNTLSGELPSDLGKN, PLQWLDVSSNSFSGEIPSTLCNK, NLTKLILFNNTFTGQIPATLSTC, SLVRVRMQNNLLNGSIPIGFGK, LEKLQRLELAGNRLSGGIPGDISDS, SLSFIDFSRNQIRSSLPSTILSI, NLQAFLVADNFISGEVPDQFQD, CPSLSNLDLSSNTLTGTIPSSIASC, KLVSLNLRNNNLTGEIPRQITTM, SALAVLDLSNNSLTGVLPESIGTS, and ALELLNVSYNKLTGPVPINGFLK. The N-linked (GlcNAc...) asparagine glycan is linked to N199. Residue N271 is glycosylated (N-linked (GlcNAc...) asparagine). N341 carries N-linked (GlcNAc...) asparagine glycosylation. N-linked (GlcNAc...) asparagine glycans are attached at residues N381, N389, and N417. N535, N557, and N578 each carry an N-linked (GlcNAc...) asparagine glycan. A helical transmembrane segment spans residues 634–654; sequence IVAGWLIGIASVLALGILTIV. Over 655-1013 the chain is Cytoplasmic; the sequence is TRTLYKKWYS…FSTSPVNGLL (359 aa). Phosphothreonine is present on T691. The region spanning 699 to 983 is the Protein kinase domain; that stretch reads IKESNMIGMG…SMLGEAKPRR (285 aa). Residues 705–713 and K728 contribute to the ATP site; that span reads IGMGATGIV. T710 is modified (phosphothreonine; by autocatalysis). Residues T741 and T742 each carry the phosphothreonine; by autocatalysis modification. A phosphotyrosine mark is found at Y777 and Y818. The Proton acceptor role is filled by D831. The residue at position 862 (T862) is a Phosphothreonine; by autocatalysis. S864 is modified (phosphoserine; by autocatalysis). At Y872 the chain carries Phosphotyrosine. Phosphotyrosine; by autocatalysis is present on Y879. Phosphothreonine; by autocatalysis occurs at positions 880 and 992. Residues 976–1013 are disordered; sequence LGEAKPRRKSNSNEENTSRSLAEKHSSVFSTSPVNGLL. A compositionally biased stretch (polar residues) spans 1002–1013; that stretch reads SVFSTSPVNGLL.

This sequence belongs to the protein kinase superfamily. Ser/Thr protein kinase family. As to quaternary structure, homodimer. Interacts with MDIS1 and LURE1.2. Autophosphorylation induced by the interaction with LURE1.2. As to expression, expressed in pollen tubes.

It is found in the cell membrane. The enzyme catalyses L-seryl-[protein] + ATP = O-phospho-L-seryl-[protein] + ADP + H(+). It carries out the reaction L-threonyl-[protein] + ATP = O-phospho-L-threonyl-[protein] + ADP + H(+). Functionally, involved in the regulation of procambium maintenance and polarity during vascular-tissue development. Involved in the pollen tube perception of the female signal. Phosphorylates MDSI1. This chain is MDIS1-interacting receptor like kinase 1, found in Arabidopsis thaliana (Mouse-ear cress).